Consider the following 426-residue polypeptide: Phosphomethylpyrimidine synthase (426 aa).

Substrate contacts are provided by residues asparagine 65, methionine 94, tyrosine 123, histidine 162, 184 to 186 (SRG), 225 to 228 (DGMR), and glutamate 264. Zn(2+) is bound at residue histidine 268. Tyrosine 291 lines the substrate pocket. Histidine 332 is a binding site for Zn(2+). Positions 408, 411, and 415 each coordinate [4Fe-4S] cluster.

This sequence belongs to the ThiC family. [4Fe-4S] cluster serves as cofactor.

The enzyme catalyses 5-amino-1-(5-phospho-beta-D-ribosyl)imidazole + S-adenosyl-L-methionine = 4-amino-2-methyl-5-(phosphooxymethyl)pyrimidine + CO + 5'-deoxyadenosine + formate + L-methionine + 3 H(+). It functions in the pathway cofactor biosynthesis; thiamine diphosphate biosynthesis. In terms of biological role, catalyzes the synthesis of the hydroxymethylpyrimidine phosphate (HMP-P) moiety of thiamine from aminoimidazole ribotide (AIR) in a radical S-adenosyl-L-methionine (SAM)-dependent reaction. In Methanococcus vannielii (strain ATCC 35089 / DSM 1224 / JCM 13029 / OCM 148 / SB), this protein is Phosphomethylpyrimidine synthase.